The primary structure comprises 323 residues: Protease Do-like 5, chloroplastic (323 aa).

Residues Met-1–Leu-28 constitute a chloroplast transit peptide. Residues Ala-29 to Ala-73 constitute a thylakoid transit peptide. Active-site charge relay system residues include His-147, Asp-188, and Ser-266. A serine protease region spans residues Asp-186–Ala-283.

Belongs to the peptidase S1C family.

It localises to the plastid. The protein localises to the chloroplast thylakoid lumen. Functionally, probable serine protease. This Arabidopsis thaliana (Mouse-ear cress) protein is Protease Do-like 5, chloroplastic (DEGP5).